The primary structure comprises 317 residues: MPAQGSQRGLLGAVNFTPTATPHLRPAANQTGPQCLEVSVPDGLFLCLGLVSLVENTLVVAAIAKNRNLHSPMYCFICCLALSDLLVSVSNLLETAVLLLLEVGALAAQATVVQQLGNVIDVLICSSMVSSLCSLGAIAMDRYISIFYALRYHSIVTLARARRAIAAVWAASILSSTLFITYYDRTAALLCLVVFFLAMLVLMALLYVHMLIQACQHAQAIARLHKRQHPVQQGWGLKGAATLTILLGVFFLCWGPFFLHLTLIAVCPQHPTCSCIFKNFRLFLALIICNTIVDPLIYAFRSQELRRTLKEVLLFSW.

The Extracellular segment spans residues 1-37 (MPAQGSQRGLLGAVNFTPTATPHLRPAANQTGPQCLE). A glycan (N-linked (GlcNAc...) asparagine) is linked at Asn29. Residues 38–63 (VSVPDGLFLCLGLVSLVENTLVVAAI) traverse the membrane as a helical segment. Residues 64–72 (AKNRNLHSP) lie on the Cytoplasmic side of the membrane. The helical transmembrane segment at 73–93 (MYCFICCLALSDLLVSVSNLL) threads the bilayer. Residues 94–118 (ETAVLLLLEVGALAAQATVVQQLGN) lie on the Extracellular side of the membrane. The chain crosses the membrane as a helical span at residues 119–140 (VIDVLICSSMVSSLCSLGAIAM). The Cytoplasmic segment spans residues 141 to 163 (DRYISIFYALRYHSIVTLARARR). Residues 164–183 (AIAAVWAASILSSTLFITYY) form a helical membrane-spanning segment. The Extracellular portion of the chain corresponds to 184–191 (DRTAALLC). A helical membrane pass occupies residues 192 to 211 (LVVFFLAMLVLMALLYVHML). Residues 212-240 (IQACQHAQAIARLHKRQHPVQQGWGLKGA) are Cytoplasmic-facing. A helical membrane pass occupies residues 241 to 266 (ATLTILLGVFFLCWGPFFLHLTLIAV). Residues 267-279 (CPQHPTCSCIFKN) lie on the Extracellular side of the membrane. Residues 280 to 300 (FRLFLALIICNTIVDPLIYAF) form a helical membrane-spanning segment. The Cytoplasmic portion of the chain corresponds to 301–317 (RSQELRRTLKEVLLFSW).

This sequence belongs to the G-protein coupled receptor 1 family. As to quaternary structure, interacts with MGRN1, but does not undergo MGRN1-mediated ubiquitination; this interaction competes with GNAS-binding and thus inhibits agonist-induced cAMP production. Interacts with OPN3; the interaction results in a decrease in MC1R-mediated cAMP signaling and ultimately a decrease in melanin production in melanocytes.

It localises to the cell membrane. Its function is as follows. Receptor for MSH (alpha, beta and gamma) and ACTH. The activity of this receptor is mediated by G proteins which activate adenylate cyclase. Mediates melanogenesis, the production of eumelanin (black/brown) and phaeomelanin (red/yellow), via regulation of cAMP signaling in melanocytes. The protein is Melanocyte-stimulating hormone receptor (MC1R) of Eulemur fulvus fulvus (Brown lemur).